We begin with the raw amino-acid sequence, 1488 residues long: Chromosome partition protein MukB (1488 aa).

34–41 is a binding site for ATP; that stretch reads GGNGAGKS. 3 coiled-coil regions span residues 326-418, 444-472, and 509-602; these read LEAD…QYNQ, LDTF…QTAH, and RHLA…QRAP. The flexible hinge stretch occupies residues 666–783; sequence PGGAEDQRLN…SLPIFGRAAR (118 aa). Coiled coils occupy residues 835-923, 977-1116, and 1209-1265; these read EAEI…AKLE, EMLS…AKAG, and VEAI…LQSV. Residues 1049 to 1074 are disordered; it reads ADSGAEERARQRRDELHAQLSNNRSR. The segment covering 1051-1065 has biased composition (basic and acidic residues); it reads SGAEERARQRRDELH.

Belongs to the SMC family. MukB subfamily. Homodimerization via its hinge domain. Binds to DNA via its C-terminal region. Interacts, and probably forms a ternary complex, with MukE and MukF via its C-terminal region. The complex formation is stimulated by calcium or magnesium. Interacts with tubulin-related protein FtsZ.

Its subcellular location is the cytoplasm. It is found in the nucleoid. In terms of biological role, plays a central role in chromosome condensation, segregation and cell cycle progression. Functions as a homodimer, which is essential for chromosome partition. Involved in negative DNA supercoiling in vivo, and by this means organize and compact chromosomes. May achieve or facilitate chromosome segregation by condensation DNA from both sides of a centrally located replisome during cell division. The polypeptide is Chromosome partition protein MukB (Salmonella gallinarum (strain 287/91 / NCTC 13346)).